Reading from the N-terminus, the 394-residue chain is S-adenosylmethionine synthase (394 aa).

H18 provides a ligand contact to ATP. Position 20 (D20) interacts with Mg(2+). A K(+)-binding site is contributed by E46. E59 and Q102 together coordinate L-methionine. Residues Q102–A112 form a flexible loop region. Residues D175–K177, D250, R256–K257, A273, and K277 contribute to the ATP site. Residue D250 coordinates L-methionine. Residue K281 participates in L-methionine binding.

Belongs to the AdoMet synthase family. In terms of assembly, homotetramer; dimer of dimers. Mg(2+) is required as a cofactor. K(+) serves as cofactor.

It is found in the cytoplasm. The enzyme catalyses L-methionine + ATP + H2O = S-adenosyl-L-methionine + phosphate + diphosphate. The protein operates within amino-acid biosynthesis; S-adenosyl-L-methionine biosynthesis; S-adenosyl-L-methionine from L-methionine: step 1/1. Functionally, catalyzes the formation of S-adenosylmethionine (AdoMet) from methionine and ATP. The overall synthetic reaction is composed of two sequential steps, AdoMet formation and the subsequent tripolyphosphate hydrolysis which occurs prior to release of AdoMet from the enzyme. In Brachyspira hyodysenteriae (strain ATCC 49526 / WA1), this protein is S-adenosylmethionine synthase.